Here is a 557-residue protein sequence, read N- to C-terminus: Formate--tetrahydrofolate ligase (557 aa).

Residue 66–73 (TPAGEGKS) coordinates ATP.

Belongs to the formate--tetrahydrofolate ligase family.

The catalysed reaction is (6S)-5,6,7,8-tetrahydrofolate + formate + ATP = (6R)-10-formyltetrahydrofolate + ADP + phosphate. Its pathway is one-carbon metabolism; tetrahydrofolate interconversion. The sequence is that of Formate--tetrahydrofolate ligase from Lactobacillus johnsonii (strain CNCM I-12250 / La1 / NCC 533).